The primary structure comprises 438 residues: Argininosuccinate lyase (438 aa).

The protein belongs to the lyase 1 family. Argininosuccinate lyase subfamily.

Its subcellular location is the cytoplasm. It carries out the reaction 2-(N(omega)-L-arginino)succinate = fumarate + L-arginine. It participates in amino-acid biosynthesis; L-arginine biosynthesis; L-arginine from L-ornithine and carbamoyl phosphate: step 3/3. The protein is Argininosuccinate lyase of Clostridium kluyveri (strain NBRC 12016).